A 265-amino-acid chain; its full sequence is 5'-nucleotidase SurE (265 aa).

Residues Asp-8, Asp-9, Ser-40, and Asn-98 each coordinate a divalent metal cation.

This sequence belongs to the SurE nucleotidase family. It depends on a divalent metal cation as a cofactor.

The protein localises to the cytoplasm. It carries out the reaction a ribonucleoside 5'-phosphate + H2O = a ribonucleoside + phosphate. Nucleotidase that shows phosphatase activity on nucleoside 5'-monophosphates. This chain is 5'-nucleotidase SurE, found in Nostoc sp. (strain PCC 7120 / SAG 25.82 / UTEX 2576).